The following is a 215-amino-acid chain: Large ribosomal subunit protein uL3 (215 aa).

Gln156 is modified (N5-methylglutamine).

The protein belongs to the universal ribosomal protein uL3 family. Part of the 50S ribosomal subunit. Forms a cluster with proteins L14 and L19. In terms of processing, methylated by PrmB.

In terms of biological role, one of the primary rRNA binding proteins, it binds directly near the 3'-end of the 23S rRNA, where it nucleates assembly of the 50S subunit. The protein is Large ribosomal subunit protein uL3 of Xylella fastidiosa (strain M12).